We begin with the raw amino-acid sequence, 64 residues long: Large ribosomal subunit protein bL33c (64 aa).

It belongs to the bacterial ribosomal protein bL33 family.

It localises to the plastid. The protein resides in the chloroplast. The protein is Large ribosomal subunit protein bL33c of Huperzia lucidula (Shining clubmoss).